Here is a 524-residue protein sequence, read N- to C-terminus: Thioredoxin reductase 2, mitochondrial (524 aa).

The N-terminal 34 residues, 1–34 (MVAAMVAALRGPSRRFRPRTRALTRGTRGAASAA), are a transit peptide targeting the mitochondrion. 41–70 (DLLVIGGGSGGLACAKEAAQLGKKVAVADY) contributes to the FAD binding site. N6-succinyllysine is present on lysine 79. A disulfide bridge connects residues cysteine 86 and cysteine 91. An N6-succinyllysine mark is found at lysine 175 and lysine 329. Histidine 497 serves as the catalytic Proton acceptor. Residues 522 to 523 (CU) constitute a cross-link (cysteinyl-selenocysteine (Cys-Sec)). A non-standard amino acid (selenocysteine) is located at residue selenocysteine 523.

The protein belongs to the class-I pyridine nucleotide-disulfide oxidoreductase family. In terms of assembly, homodimer. It depends on FAD as a cofactor. Expressed in liver, heart, testis and kidney.

It is found in the mitochondrion. The catalysed reaction is [thioredoxin]-dithiol + NADP(+) = [thioredoxin]-disulfide + NADPH + H(+). Functionally, involved in the control of reactive oxygen species levels and the regulation of mitochondrial redox homeostasis. Maintains thioredoxin in a reduced state. May play a role in redox-regulated cell signaling. The sequence is that of Thioredoxin reductase 2, mitochondrial from Mus musculus (Mouse).